Here is a 1357-residue protein sequence, read N- to C-terminus: DNA-directed RNA polymerase subunit beta (1357 aa).

The protein belongs to the RNA polymerase beta chain family. In terms of assembly, the RNAP catalytic core consists of 2 alpha, 1 beta, 1 beta' and 1 omega subunit. When a sigma factor is associated with the core the holoenzyme is formed, which can initiate transcription.

It carries out the reaction RNA(n) + a ribonucleoside 5'-triphosphate = RNA(n+1) + diphosphate. DNA-dependent RNA polymerase catalyzes the transcription of DNA into RNA using the four ribonucleoside triphosphates as substrates. This Pseudomonas putida (strain ATCC 700007 / DSM 6899 / JCM 31910 / BCRC 17059 / LMG 24140 / F1) protein is DNA-directed RNA polymerase subunit beta.